Here is a 213-residue protein sequence, read N- to C-terminus: MAKNYYDITLALSGICQSARLVQQLAHQGHCDADALHVSLNSVIDMNPSSTLGVFGGSEANLRLGLETLLGVLNASSRQGLNAELTRYTLSLMVLERKLSSAKGALNTLGDRINGLQRQLDHFDLQSDTLMSAMAGIYVDVISPLGPRIQVTGSPAVLQSPQVQAKVRASLLAGIRAAVLWHQVGGGRLQLMFSRHRLTTQAKQILAHLTPEL.

The stretch at 79–122 (QGLNAELTRYTLSLMVLERKLSSAKGALNTLGDRINGLQRQLDH) forms a coiled coil.

The protein belongs to the HflD family.

The protein resides in the cytoplasm. Its subcellular location is the cell inner membrane. In Salmonella agona (strain SL483), this protein is High frequency lysogenization protein HflD homolog.